A 733-amino-acid polypeptide reads, in one-letter code: Ribosomal protein S6 kinase 2 alpha (733 aa).

Residues 18–38 are disordered; sequence EDPENGHGSPEEGGRHTSKDE. The Protein kinase 1 domain maps to 62 to 321; that stretch reads FVLLKVLGQG…AEEIKRQPFF (260 aa). Residues 68–76 and Lys94 contribute to the ATP site; that span reads LGQGSFGKV. The Proton acceptor role is filled by Asp187. Ser221 bears the Phosphoserine mark. Positions 322-391 constitute an AGC-kinase C-terminal domain; sequence STIDWNKLFR…VAPALVEEDA (70 aa). Thr359 bears the Phosphothreonine mark. Ser363 is subject to Phosphoserine. At Ser380 the chain carries Phosphoserine; by autocatalysis. The Protein kinase 2 domain maps to 416-673; it reads YTVRETIGVG…AKQVLQHEWI (258 aa). ATP contacts are provided by residues 422–430 and Lys445; that span reads IGVGSYSVC. Asp533 serves as the catalytic Proton acceptor. Residue Thr571 is modified to Phosphothreonine. Ser730 is subject to Phosphoserine.

The protein belongs to the protein kinase superfamily. AGC Ser/Thr protein kinase family. S6 kinase subfamily. It depends on Mg(2+) as a cofactor. Autophosphorylated on Ser-380, as part of the activation process.

It carries out the reaction L-seryl-[protein] + ATP = O-phospho-L-seryl-[protein] + ADP + H(+). The enzyme catalyses L-threonyl-[protein] + ATP = O-phospho-L-threonyl-[protein] + ADP + H(+). With respect to regulation, activated by multiple phosphorylations on threonine and serine residues. Functionally, serine/threonine kinase that may play a role in mediating the growth-factor and stress induced activation of transcription. The polypeptide is Ribosomal protein S6 kinase 2 alpha (rps6ka) (Xenopus laevis (African clawed frog)).